Consider the following 589-residue polypeptide: Protein NRT1/ PTR FAMILY 7.2 (589 aa).

2 helical membrane-spanning segments follow: residues 32-52 (WLTA…FFGV) and 78-98 (WTGT…SYWG). Thr102 carries the phosphothreonine modification. Transmembrane regions (helical) follow at residues 105–125 (IFQA…GALL), 147–167 (VLFY…QPNI), 187–207 (IAFF…SNTV), 217–237 (WPLG…LFLI), 343–363 (IWLC…LFVV), 377–397 (IPAS…IFAY), 423–443 (MGIG…VEIH), 464–484 (IFWQ…MYVG), 504–524 (LCMA…SIVM), and 548–568 (FYFL…ICAK).

Belongs to the major facilitator superfamily. Proton-dependent oligopeptide transporter (POT/PTR) (TC 2.A.17) family. Expressed in xylem parenchyma cells within the vasculature. Expressed in siliques and flowers. Higher expression in shoots than in roots.

It localises to the cell membrane. Its function is as follows. Low-affinity nitrate transporter. Involved in nitrate removal from xylem sap. Not involved in oligopeptides transport. The sequence is that of Protein NRT1/ PTR FAMILY 7.2 (NPF7.2) from Arabidopsis thaliana (Mouse-ear cress).